Reading from the N-terminus, the 291-residue chain is Kidney mitochondrial carrier protein 1 (291 aa).

At S2 the chain carries N-acetylserine. Solcar repeat units follow at residues 7 to 96 (KPFV…LKRL), 104 to 189 (ETLP…TKKH), and 198 to 289 (DTVY…LKKL). A run of 6 helical transmembrane segments spans residues 9–26 (FVYGGLASITAECGTFPI), 71–89 (GIAPAMLRQASYGTIKIGT), 105–124 (TLPINVICGILSGVISSTIA), 164–183 (GVSLTAQRAAIVVGVELPVY), 204–224 (FLSSFTCGLAGALASNPVDVV), and 264–283 (GFWPNWLRLGPWNIIFFVTY).

This sequence belongs to the mitochondrial carrier (TC 2.A.29) family. As to quaternary structure, interacts with VDAC1.

Its subcellular location is the mitochondrion inner membrane. The enzyme catalyses sulfite(in) + sulfate(out) = sulfite(out) + sulfate(in). It carries out the reaction thiosulfate(in) + sulfate(out) = thiosulfate(out) + sulfate(in). It catalyses the reaction sulfate(out) + phosphate(in) = sulfate(in) + phosphate(out). The catalysed reaction is oxalate(in) + sulfate(out) = oxalate(out) + sulfate(in). The enzyme catalyses malonate(in) + sulfate(out) = malonate(out) + sulfate(in). It carries out the reaction maleate(in) + sulfate(out) = maleate(out) + sulfate(in). It catalyses the reaction (S)-malate(in) + sulfate(out) = (S)-malate(out) + sulfate(in). The catalysed reaction is (3S)-citramalate(in) + sulfate(out) = (3S)-citramalate(out) + sulfate(in). The enzyme catalyses (3R)-citramalate(in) + sulfate(out) = (3R)-citramalate(out) + sulfate(in). It carries out the reaction sulfate(out) + succinate(in) = sulfate(in) + succinate(out). It catalyses the reaction (S,S)-tartrate(in) + sulfate(out) = (S,S)-tartrate(out) + sulfate(in). The catalysed reaction is (2R,3R)-tartrate(in) + sulfate(out) = (2R,3R)-tartrate(out) + sulfate(in). The enzyme catalyses D-aspartate(in) + sulfate(out) = D-aspartate(out) + sulfate(in). It carries out the reaction L-aspartate(in) + sulfate(out) = L-aspartate(out) + sulfate(in). It catalyses the reaction sulfate(in) = sulfate(out). The catalysed reaction is phosphate(in) = phosphate(out). The enzyme catalyses (S)-malate(out) = (S)-malate(in). Increased activity at pH 6.0. sulfate/sulfate exchange activity is inhibited strongly by pyridoxal 5'-phosphate, bathophenanthroline and the organic mercurials mersalyl, p-chloromercuribenzoate and HgCl2. Antiporter that transports inorganic anions (sulfate, sulfite, thiosulfate and phosphate) and, to a lesser extent, a variety of dicarboxylates (e.g. malonate, malate and citramalate) and, even more so, aspartate. The sulfate/sulfate exchange is much higher than the phosphate/phosphate and malate/malate exchanges. The transport affinities is higher for sulfate and thiosulfate than for any other substrate. May catalyze the export of sulfite and thiosulfate (the hydrogen sulfide degradation products) from the mitochondria, thereby modulating the level of the hydrogen sulfide. Also may mediate a very low unidirectional transport of sulfate, phosphate and (S)-malate. This Homo sapiens (Human) protein is Kidney mitochondrial carrier protein 1.